A 564-amino-acid polypeptide reads, in one-letter code: Pyruvate decarboxylase (564 aa).

Pyruvate is bound by residues D28 and H115. Thiamine diphosphate is bound by residues T390 and 413–415 (GSI). D444 contributes to the Mg(2+) binding site. Thiamine diphosphate-binding positions include 445 to 446 (GS) and 471 to 476 (NNGYTI). Mg(2+) contacts are provided by N471 and G473. E477 contacts pyruvate.

This sequence belongs to the TPP enzyme family. As to quaternary structure, homotetramer. Requires Mg(2+) as cofactor. It depends on thiamine diphosphate as a cofactor.

It carries out the reaction a 2-oxocarboxylate + H(+) = an aldehyde + CO2. The catalysed reaction is pyruvate + H(+) = acetaldehyde + CO2. This chain is Pyruvate decarboxylase (PDC), found in Hanseniaspora uvarum (Yeast).